Reading from the N-terminus, the 974-residue chain is Serine/threonine-protein kinase 10 (974 aa).

The 259-residue stretch at 37 to 295 (WEIIGELGDG…AAQLLEHPFV (259 aa)) folds into the Protein kinase domain. Residues 43-51 (LGDGAFGKV) and Lys-66 contribute to the ATP site. Catalysis depends on Asp-158, which acts as the Proton acceptor. Residues 320-332 (EDNHEDGEDEDPA) show a composition bias toward acidic residues. The interval 320-479 (EDNHEDGEDE…EKEDHCEETQ (160 aa)) is disordered. Residues 343 to 353 (DPSQTSATSLN) are compositionally biased toward polar residues. 2 stretches are compositionally biased toward basic and acidic residues: residues 382–406 (PLKEQEDNLSDKFQVEDHDKPESEA) and 458–477 (TMEKYLEKPKEPEKEDHCEE). Coiled coils occupy residues 605-729 (QKEQ…EEQK) and 870-950 (EKVK…EHLK).

The protein belongs to the protein kinase superfamily. STE Ser/Thr protein kinase family. STE20 subfamily. As to quaternary structure, homodimer. Post-translationally, autophosphorylates.

It localises to the cell membrane. It catalyses the reaction L-seryl-[protein] + ATP = O-phospho-L-seryl-[protein] + ADP + H(+). The catalysed reaction is L-threonyl-[protein] + ATP = O-phospho-L-threonyl-[protein] + ADP + H(+). May act as a polo kinase kinase by mediating phosphorylation of plk1. The sequence is that of Serine/threonine-protein kinase 10 (stk10) from Danio rerio (Zebrafish).